The sequence spans 75 residues: UPF0512 protein D (75 aa).

The interval M1–S20 is disordered.

It belongs to the UPF0512 family.

This Dictyostelium discoideum (Social amoeba) protein is UPF0512 protein D.